A 288-amino-acid chain; its full sequence is MHFLSPAKLNLFLQILGRREDDFHEIVTRYQAIAFGDQLSLSISSRDSLQVINACHLETPSNSIWKSVALFRRYTGITTPVSWRVVKQIPVGAGLAGGSSNAATALFALNQIFKTGLSDEEMRSLAEQLGVDTPFFFSTGAALGVARGEKIIALEESVSDRYVLYFSSEGVLTSRAFAAVQPSDCSSRKNLEYTQNDLEKPVFRLRLDLKEKKHWLENLWAELPVHIGLTGSGATLFVRYPEILEEDLSYAAQIQRAVTLSGGLLTSPIRRDPTAWYSIYSESALAAT.

The active site involves lysine 8. 90 to 100 (PVGAGLAGGSS) is a binding site for ATP. Residue aspartate 132 is part of the active site.

This sequence belongs to the GHMP kinase family. IspE subfamily.

The enzyme catalyses 4-CDP-2-C-methyl-D-erythritol + ATP = 4-CDP-2-C-methyl-D-erythritol 2-phosphate + ADP + H(+). Its pathway is isoprenoid biosynthesis; isopentenyl diphosphate biosynthesis via DXP pathway; isopentenyl diphosphate from 1-deoxy-D-xylulose 5-phosphate: step 3/6. Its function is as follows. Catalyzes the phosphorylation of the position 2 hydroxy group of 4-diphosphocytidyl-2C-methyl-D-erythritol. The sequence is that of 4-diphosphocytidyl-2-C-methyl-D-erythritol kinase from Chlamydia trachomatis serovar D (strain ATCC VR-885 / DSM 19411 / UW-3/Cx).